A 202-amino-acid chain; its full sequence is Small ribosomal subunit protein uS4 (202 aa).

Residues 15-42 (LGDLPGLTRKAAKRSYPPGQHGQARRKR) are disordered. The 63-residue stretch at 90–152 (NRLDNVCFRL…KCSKQLAEGN (63 aa)) folds into the S4 RNA-binding domain.

Belongs to the universal ribosomal protein uS4 family. Part of the 30S ribosomal subunit. Contacts protein S5. The interaction surface between S4 and S5 is involved in control of translational fidelity.

Functionally, one of the primary rRNA binding proteins, it binds directly to 16S rRNA where it nucleates assembly of the body of the 30S subunit. Its function is as follows. With S5 and S12 plays an important role in translational accuracy. This Synechococcus sp. (strain WH7803) protein is Small ribosomal subunit protein uS4.